Reading from the N-terminus, the 933-residue chain is 2-oxoglutarate dehydrogenase E1 component (933 aa).

This sequence belongs to the alpha-ketoglutarate dehydrogenase family. As to quaternary structure, homodimer. Part of the 2-oxoglutarate dehydrogenase (OGDH) complex composed of E1 (2-oxoglutarate dehydrogenase), E2 (dihydrolipoamide succinyltransferase) and E3 (dihydrolipoamide dehydrogenase); the complex contains multiple copies of the three enzymatic components (E1, E2 and E3). It depends on thiamine diphosphate as a cofactor.

The catalysed reaction is N(6)-[(R)-lipoyl]-L-lysyl-[protein] + 2-oxoglutarate + H(+) = N(6)-[(R)-S(8)-succinyldihydrolipoyl]-L-lysyl-[protein] + CO2. Its function is as follows. E1 component of the 2-oxoglutarate dehydrogenase (OGDH) complex which catalyzes the decarboxylation of 2-oxoglutarate, the first step in the conversion of 2-oxoglutarate to succinyl-CoA and CO(2). This is 2-oxoglutarate dehydrogenase E1 component (sucA) from Rickettsia typhi (strain ATCC VR-144 / Wilmington).